The sequence spans 463 residues: Endoglucanase (463 aa).

An N-terminal signal peptide occupies residues 1–27; the sequence is MVEKRKIFTVLCACGIGFTSYTSCISA. A propeptide spanning residues 28-55 is cleaved from the precursor; sequence AAIDNDTLINNGHKINSSIITNSSQVSA. E130 (proton donor) is an active-site residue. The active-site Nucleophile is the D191.

The protein belongs to the glycosyl hydrolase 8 (cellulase D) family. The N- and the C-terminus may be subjected to proteolysis.

The enzyme catalyses Endohydrolysis of (1-&gt;4)-beta-D-glucosidic linkages in cellulose, lichenin and cereal beta-D-glucans.. The protein is Endoglucanase of Bacillus sp. (strain KSM-330).